The primary structure comprises 187 residues: Threonylcarbamoyl-AMP synthase (187 aa).

The 185-residue stretch at 3–187 (NSELLKIIWA…LLNGYLYRKR (185 aa)) folds into the YrdC-like domain.

It belongs to the SUA5 family. TsaC subfamily.

The protein localises to the cytoplasm. The catalysed reaction is L-threonine + hydrogencarbonate + ATP = L-threonylcarbamoyladenylate + diphosphate + H2O. In terms of biological role, required for the formation of a threonylcarbamoyl group on adenosine at position 37 (t(6)A37) in tRNAs that read codons beginning with adenine. Catalyzes the conversion of L-threonine, HCO(3)(-)/CO(2) and ATP to give threonylcarbamoyl-AMP (TC-AMP) as the acyladenylate intermediate, with the release of diphosphate. The sequence is that of Threonylcarbamoyl-AMP synthase from Riesia pediculicola (strain USDA).